The chain runs to 111 residues: Cytochrome c (111 aa).

A1 is modified (N-acetylalanine). Residues C22, C25, and H26 each coordinate heme c. K80 is modified (N6,N6,N6-trimethyllysine). M88 contributes to the heme c binding site. K94 bears the N6,N6,N6-trimethyllysine mark.

It belongs to the cytochrome c family. In terms of processing, binds 1 heme c group covalently per subunit.

The protein localises to the mitochondrion intermembrane space. In terms of biological role, electron carrier protein. The oxidized form of the cytochrome c heme group can accept an electron from the heme group of the cytochrome c1 subunit of cytochrome reductase. Cytochrome c then transfers this electron to the cytochrome oxidase complex, the final protein carrier in the mitochondrial electron-transport chain. This is Cytochrome c from Nigella damascena (Love-in-a-mist).